Reading from the N-terminus, the 68-residue chain is Large ribosomal subunit protein bL35 (68 aa).

The protein belongs to the bacterial ribosomal protein bL35 family.

This chain is Large ribosomal subunit protein bL35, found in Wolbachia pipientis wMel.